A 352-amino-acid chain; its full sequence is Endophilin-A1 (352 aa).

Residues 1–21 (MSVAGLKKQFHKATQKVSEKV) are membrane-binding amphipathic helix. Positions 1–27 (MSVAGLKKQFHKATQKVSEKVGGAEGT) are disordered. The segment at 1–125 (MSVAGLKKQF…EVGEAMRELS (125 aa)) is binds and tubulates liposomes. The BAR domain maps to 18 to 249 (SEKVGGAEGT…LEERIRQASS (232 aa)). Residues 60–87 (PNPASRAKLSMINTMSKIRGQEKGPGYP) form a required for dimerization upon membrane association region. Positions 181-248 (EELRQALEKF…RLEERIRQAS (68 aa)) form a coiled coil. Ser262 carries the phosphoserine modification. The interval 264–289 (EFATGDSTQPNGGLSHTGTPKPPGVQ) is disordered. Polar residues predominate over residues 268–281 (GDSTQPNGGLSHTG). One can recognise an SH3 domain in the interval 290-349 (MDQPCCRALYDFEPENEGELGFKEGDIITLTNQIDENWYEGMLHGQSGFFPINYVEILVA). At Tyr299 the chain carries Phosphotyrosine.

The protein belongs to the endophilin family. Monomer; in cytoplasm. Homodimer; when associated with membranes. Interacts with SYNJ1. Interacts with DNM1. Interacts with MAP4K3; the interaction appears to regulate MAP4K3-mediated JNK activation. Interacts with OPHN1. Interacts with PDCD6IP. Interacts with BIN2. Interacts with ATXN2. Interacts with ADAM9 and ADAM15 cytoplasmic tails. Interacts with TMEM108. Interacts with ADGRB2.

Its subcellular location is the cytoplasm. It localises to the membrane. The protein localises to the early endosome. The protein resides in the presynapse. In terms of biological role, implicated in synaptic vesicle endocytosis. May recruit other proteins to membranes with high curvature. Required for BDNF-dependent dendrite outgrowth. Cooperates with SH3GL2 to mediate BDNF-NTRK2 early endocytic trafficking and signaling from early endosomes. The polypeptide is Endophilin-A1 (Sh3gl2) (Mus musculus (Mouse)).